Reading from the N-terminus, the 497-residue chain is UPF0371 protein cu0538 (497 aa).

This sequence belongs to the UPF0371 family.

This chain is UPF0371 protein cu0538, found in Corynebacterium urealyticum (strain ATCC 43042 / DSM 7109).